We begin with the raw amino-acid sequence, 147 residues long: Large ribosomal subunit protein bL21 (147 aa).

The tract at residues Glu-125–Glu-147 is disordered.

The protein belongs to the bacterial ribosomal protein bL21 family. As to quaternary structure, part of the 50S ribosomal subunit. Contacts protein L20.

This protein binds to 23S rRNA in the presence of protein L20. In Flavobacterium johnsoniae (strain ATCC 17061 / DSM 2064 / JCM 8514 / BCRC 14874 / CCUG 350202 / NBRC 14942 / NCIMB 11054 / UW101) (Cytophaga johnsonae), this protein is Large ribosomal subunit protein bL21.